Consider the following 395-residue polypeptide: Thyroid hormone receptor beta (395 aa).

The interval 1 to 31 (MSEPAENCSPRWKDEAIQNGYIPSYLDKDEL) is modulating. 8 residues coordinate Zn(2+): C32, C35, C49, C52, C70, C76, C86, and C89. 2 consecutive NR C4-type zinc fingers follow at residues 32–52 (CVVCGDKATGYHYRCITCEGC) and 70–94 (CKYEGKCVIDKVTRNQCQECRFKKC). Residues 32–99 (CVVCGDKATG…RFKKCIAVGM (68 aa)) constitute a DNA-binding region (nuclear receptor). The region spanning 142-395 (EEWDLIRMVT…PPLFLEVFED (254 aa)) is the NR LBD domain. 3,3',5-triiodo-L-thyronine-binding residues include R216, N265, and H369. R216, N265, and H369 together coordinate L-thyroxine.

This sequence belongs to the nuclear hormone receptor family. NR1 subfamily.

The protein localises to the nucleus. Its function is as follows. Nuclear hormone receptor that can act as a repressor or activator of transcription. High affinity receptor for thyroid hormones, including triiodothyronine and thyroxine. This Paralichthys olivaceus (Bastard halibut) protein is Thyroid hormone receptor beta (thrb).